We begin with the raw amino-acid sequence, 346 residues long: Uroporphyrinogen decarboxylase (346 aa).

Substrate contacts are provided by residues 26–30 (RQAGR), aspartate 76, tyrosine 153, serine 208, and histidine 323.

It belongs to the uroporphyrinogen decarboxylase family. In terms of assembly, homodimer.

It localises to the cytoplasm. The enzyme catalyses uroporphyrinogen III + 4 H(+) = coproporphyrinogen III + 4 CO2. Its pathway is porphyrin-containing compound metabolism; protoporphyrin-IX biosynthesis; coproporphyrinogen-III from 5-aminolevulinate: step 4/4. Catalyzes the decarboxylation of four acetate groups of uroporphyrinogen-III to yield coproporphyrinogen-III. The chain is Uroporphyrinogen decarboxylase from Prochlorococcus marinus (strain MIT 9301).